The following is a 693-amino-acid chain: Polyribonucleotide nucleotidyltransferase (693 aa).

Aspartate 489 and aspartate 495 together coordinate Mg(2+). Residues 556-615 (PQIHVMNINPAKIKDVVGRGGATVKGIVEKTGAQIDTSDSGEVKVFAKDKKSMDMAVAMI) form the KH domain. Positions 625–693 (GQVYKGKIVK…GRVKLSLVAR (69 aa)) constitute an S1 motif domain.

This sequence belongs to the polyribonucleotide nucleotidyltransferase family. As to quaternary structure, component of the RNA degradosome, which is a multiprotein complex involved in RNA processing and mRNA degradation. Mg(2+) serves as cofactor.

It is found in the cytoplasm. The enzyme catalyses RNA(n+1) + phosphate = RNA(n) + a ribonucleoside 5'-diphosphate. In terms of biological role, involved in mRNA degradation. Catalyzes the phosphorolysis of single-stranded polyribonucleotides processively in the 3'- to 5'-direction. In Francisella tularensis subsp. holarctica (strain OSU18), this protein is Polyribonucleotide nucleotidyltransferase.